A 276-amino-acid polypeptide reads, in one-letter code: ATP synthase subunit a (276 aa).

The next 6 membrane-spanning stretches (helical) occupy residues 27–47, 61–81, 120–140, 159–179, 225–245, and 246–266; these read ITMLAGLSVLNLFPLAALEVG, GQTFATSWFVILLLVIASLAA, LPFIGTLFLFIFVSNWSGALL, DINTTVALALLTSLAYFYAGL, LVVAVLVLLVPLLVPLPLMAL, and GLFTSAIQALVFATLAGAYIH.

The protein belongs to the ATPase A chain family. F-type ATPases have 2 components, CF(1) - the catalytic core - and CF(0) - the membrane proton channel. CF(1) has five subunits: alpha(3), beta(3), gamma(1), delta(1), epsilon(1). CF(0) has four main subunits: a, b, b' and c.

The protein localises to the cellular thylakoid membrane. In terms of biological role, key component of the proton channel; it plays a direct role in the translocation of protons across the membrane. This Synechocystis sp. (strain ATCC 27184 / PCC 6803 / Kazusa) protein is ATP synthase subunit a.